A 465-amino-acid chain; its full sequence is Antithrombin-III (465 aa).

The first 32 residues, 1-32 (MISNGIGTVTTGKRSMCLFPLLLIGLWGCVTC), serve as a signal peptide directing secretion. 2 disulfides stabilise this stretch: Cys-41–Cys-161 and Cys-54–Cys-128. At Thr-64 the chain carries Phosphothreonine. The residue at position 69 (Ser-69) is a Phosphoserine. Trp-82 provides a ligand contact to heparin. Asn-129 carries N-linked (GlcNAc...) asparagine glycosylation. Arg-162 serves as a coordination point for heparin. A glycan (N-linked (GlcNAc...) asparagine) is linked at Asn-168. Residue Arg-178 participates in heparin binding. N-linked (GlcNAc...) asparagine glycosylation is found at Asn-188 and Asn-225. Cys-280 and Cys-463 form a disulfide bridge.

This sequence belongs to the serpin family. Forms protease inhibiting heterodimer with TMPRSS7. In terms of processing, phosphorylated by FAM20C in the extracellular medium. Plasma.

It is found in the secreted. It localises to the extracellular space. Functionally, most important serine protease inhibitor in plasma that regulates the blood coagulation cascade. AT-III inhibits thrombin, matriptase-3/TMPRSS7, as well as factors IXa, Xa and XIa. Its inhibitory activity is greatly enhanced in the presence of heparin. In Ovis aries (Sheep), this protein is Antithrombin-III (SERPINC1).